A 530-amino-acid chain; its full sequence is Anthranilate synthase component 1, pyocyanine specific (530 aa).

Residue 331-332 (GT) participates in substrate binding. Residue E364 participates in Mg(2+) binding. Substrate contacts are provided by residues Y452, R472, 486–488 (GAG), and G488. E501 contacts Mg(2+).

This sequence belongs to the anthranilate synthase component I family. As to quaternary structure, heterotetramer consisting of two non-identical subunits: a beta subunit (PhnB) and a large alpha subunit (PhnA). The cofactor is Mg(2+).

It carries out the reaction chorismate + L-glutamine = anthranilate + pyruvate + L-glutamate + H(+). Its pathway is secondary metabolite biosynthesis; pyocyanine biosynthesis. In terms of biological role, part of a heterotetrameric complex that catalyzes the two-step biosynthesis of anthranilate, a precursor for Pseudomonas quinolone signal (2-heptyl-3-hydroxy-4-quinolone; PQS) production which is required to induce the genes for the biosynthesis of the virulence factor pyocyanine (PCN), a characteristic blue-green phenazine pigment produced by P.aeruginosa. In the first step, the glutamine-binding beta subunit (PhnB) of anthranilate synthase (AS) provides the glutamine amidotransferase activity which generates ammonia as a substrate that, along with chorismate, is used in the second step, catalyzed by the large alpha subunit of AS (PhnA) to produce anthranilate. The chain is Anthranilate synthase component 1, pyocyanine specific from Pseudomonas aeruginosa (strain ATCC 15692 / DSM 22644 / CIP 104116 / JCM 14847 / LMG 12228 / 1C / PRS 101 / PAO1).